The chain runs to 777 residues: Intraflagellar transport protein 80 homolog (777 aa).

WD repeat units lie at residues Lys12–Ile50, Ala104–Leu143, Gln145–Lys185, Ala186–Ser225, Pro227–Glu265, Pro267–Lys306, and Lys504–Arg542. The tract at residues Thr758–Pro777 is disordered. Positions Ser765–Pro777 are enriched in polar residues.

Component of the IFT complex B, at least composed of IFT20, IFT22, IFT25, IFT27, IFT46, IFT52, TRAF3IP1/IFT54, IFT57, IFT74, IFT80, IFT81, and IFT88. Interacts with IFT88. Interacts with IFT57 and IFT70B.

Its subcellular location is the cytoplasm. The protein resides in the cytoskeleton. It localises to the cilium basal body. The protein localises to the cilium axoneme. Component of the intraflagellar transport (IFT) complex B, which is essential for the development and maintenance of motile and sensory cilia. The chain is Intraflagellar transport protein 80 homolog (Ift80) from Rattus norvegicus (Rat).